Reading from the N-terminus, the 144-residue chain is Mannitol-specific phosphotransferase enzyme IIA component (144 aa).

The PTS EIIA type-2 domain occupies 3–142 (ELFSNDNIFL…EEIKQVFEEA (140 aa)). The Tele-phosphohistidine intermediate role is filled by histidine 63. Histidine 63 bears the Phosphohistidine; by HPr mark.

In terms of assembly, homodimer or homotrimer. Seems to be a monomer when not phosphorylated.

The protein localises to the cytoplasm. Its function is as follows. The phosphoenolpyruvate-dependent sugar phosphotransferase system (sugar PTS), a major carbohydrate active transport system, catalyzes the phosphorylation of incoming sugar substrates concomitantly with their translocation across the cell membrane. The enzyme II CmtAB PTS system is involved in D-mannitol transport. The sequence is that of Mannitol-specific phosphotransferase enzyme IIA component (mtlF) from Staphylococcus aureus (strain COL).